A 158-amino-acid polypeptide reads, in one-letter code: 2-C-methyl-D-erythritol 2,4-cyclodiphosphate synthase (158 aa).

A divalent metal cation is bound by residues Asp-9 and His-11. 4-CDP-2-C-methyl-D-erythritol 2-phosphate-binding positions include 9–11 and 35–36; these read DVH and HS. His-43 is a binding site for a divalent metal cation. Residues 57–59, 62–66, 133–136, Phe-140, and Arg-143 each bind 4-CDP-2-C-methyl-D-erythritol 2-phosphate; these read DIG, FPDTD, and TTTE.

Belongs to the IspF family. In terms of assembly, homotrimer. A divalent metal cation is required as a cofactor.

It carries out the reaction 4-CDP-2-C-methyl-D-erythritol 2-phosphate = 2-C-methyl-D-erythritol 2,4-cyclic diphosphate + CMP. The protein operates within isoprenoid biosynthesis; isopentenyl diphosphate biosynthesis via DXP pathway; isopentenyl diphosphate from 1-deoxy-D-xylulose 5-phosphate: step 4/6. Involved in the biosynthesis of isopentenyl diphosphate (IPP) and dimethylallyl diphosphate (DMAPP), two major building blocks of isoprenoid compounds. Catalyzes the conversion of 4-diphosphocytidyl-2-C-methyl-D-erythritol 2-phosphate (CDP-ME2P) to 2-C-methyl-D-erythritol 2,4-cyclodiphosphate (ME-CPP) with a corresponding release of cytidine 5-monophosphate (CMP). The sequence is that of 2-C-methyl-D-erythritol 2,4-cyclodiphosphate synthase from Actinobacillus pleuropneumoniae serotype 7 (strain AP76).